Here is a 199-residue protein sequence, read N- to C-terminus: NAD(P)H dehydrogenase (quinone) (199 aa).

The region spanning 4-190 is the Flavodoxin-like domain; that stretch reads VLVLYYSTYG…AGARHQGELV (187 aa). FMN is bound by residues 10–15 and 78–80; these read STYGHL and TRF. Y12 lines the NAD(+) pocket. Residue W98 coordinates substrate. Residues 113-119 and H134 contribute to the FMN site; that span reads STATQHG.

The protein belongs to the WrbA family. Requires FMN as cofactor.

It carries out the reaction a quinone + NADH + H(+) = a quinol + NAD(+). The enzyme catalyses a quinone + NADPH + H(+) = a quinol + NADP(+). The polypeptide is NAD(P)H dehydrogenase (quinone) (Azorhizobium caulinodans (strain ATCC 43989 / DSM 5975 / JCM 20966 / LMG 6465 / NBRC 14845 / NCIMB 13405 / ORS 571)).